We begin with the raw amino-acid sequence, 426 residues long: Phosphoribosylamine--glycine ligase (426 aa).

One can recognise an ATP-grasp domain in the interval 107-313; it reads KDFMQKYGVK…FLNVINSALN (207 aa). Residue 133–194 coordinates ATP; sequence LDKISYPVVI…EEFLDGVEIS (62 aa). Positions 283 and 285 each coordinate Mg(2+).

Belongs to the GARS family. Mg(2+) serves as cofactor. The cofactor is Mn(2+).

It carries out the reaction 5-phospho-beta-D-ribosylamine + glycine + ATP = N(1)-(5-phospho-beta-D-ribosyl)glycinamide + ADP + phosphate + H(+). It functions in the pathway purine metabolism; IMP biosynthesis via de novo pathway; N(1)-(5-phospho-D-ribosyl)glycinamide from 5-phospho-alpha-D-ribose 1-diphosphate: step 2/2. This is Phosphoribosylamine--glycine ligase from Fusobacterium nucleatum subsp. nucleatum (strain ATCC 25586 / DSM 15643 / BCRC 10681 / CIP 101130 / JCM 8532 / KCTC 2640 / LMG 13131 / VPI 4355).